The following is a 125-amino-acid chain: Small ribosomal subunit protein bS6 (125 aa).

Belongs to the bacterial ribosomal protein bS6 family.

In terms of biological role, binds together with bS18 to 16S ribosomal RNA. This Campylobacter jejuni subsp. jejuni serotype O:23/36 (strain 81-176) protein is Small ribosomal subunit protein bS6.